Here is a 208-residue protein sequence, read N- to C-terminus: Large ribosomal subunit protein uL3 (208 aa).

The tract at residues 124-146 is disordered; sequence HGQSRGPMAHGSRYHRRPGSMGP.

This sequence belongs to the universal ribosomal protein uL3 family. As to quaternary structure, part of the 50S ribosomal subunit. Forms a cluster with proteins L14 and L19.

Functionally, one of the primary rRNA binding proteins, it binds directly near the 3'-end of the 23S rRNA, where it nucleates assembly of the 50S subunit. This is Large ribosomal subunit protein uL3 from Streptococcus thermophilus (strain ATCC BAA-491 / LMD-9).